A 1355-amino-acid polypeptide reads, in one-letter code: Phospholipid-transporting ATPase DRS2 (1355 aa).

Over residues 1–15 (MNDDRETPPKRKPGE) the composition is skewed to basic and acidic residues. Residues 1-50 (MNDDRETPPKRKPGEDDTLFDIDFLDDTTSHSGSRSKVTNSHANANYIPP) form a disordered region. The segment at 1 to 104 (MNDDRETPPK…SDAYQPQSLR (104 aa)) is involved in autoinhibition. At 1–221 (MNDDRETPPK…TFLPKFLFQE (221 aa)) the chain is on the cytoplasmic side. The span at 16–26 (DDTLFDIDFLD) shows a compositional bias: acidic residues. Polar residues predominate over residues 30 to 44 (SHSGSRSKVTNSHAN). Position 102 is a phosphoserine (Ser-102). The helical transmembrane segment at 222–242 (FSKYANLFFLCTSAIQQVPHV) threads the bilayer. Residues 237 to 238 (QQ) form an involved in phosphatidylserine substrate recognition region. Topologically, residues 243–246 (SPTN) are lumenal. The chain crosses the membrane as a helical span at residues 247–267 (RYTTIGTLLVVLIVSAMKECI). Topologically, residues 268–449 (EDIKRANSDK…VEKIINRQII (182 aa)) are cytoplasmic. A helical membrane pass occupies residues 450 to 470 (ALFTVLIVLILISSIGNVIMS). The Lumenal segment spans residues 471 to 490 (TADAKHLSYLYLEGTNKAGL). A helical membrane pass occupies residues 491 to 511 (FFKDFLTFWILFSNLVPISLF). Residues 512–1012 (VTVELIKYYQ…WSYQRISVAI (501 aa)) lie on the Cytoplasmic side of the membrane. Asp-560 (4-aspartylphosphate intermediate) is an active-site residue. Asp-560, Lys-561, Thr-562, Glu-655, Phe-698, Ser-700, Lys-703, Lys-721, Arg-755, Thr-756, Thr-835, Gly-836, Asp-837, Arg-928, and Lys-934 together coordinate ATP. Asp-560 lines the Mg(2+) pocket. Residue Thr-562 participates in Mg(2+) binding. Asp-954 contributes to the Mg(2+) binding site. The ATP site is built by Asn-957 and Asp-958. Asp-958 is a binding site for Mg(2+). Residues 1013 to 1033 (LYSFYKNTALYMTQFWYVFAN) form a helical membrane-spanning segment. The Lumenal portion of the chain corresponds to 1034–1043 (AFSGQSIMES). The chain crosses the membrane as a helical span at residues 1044–1064 (WTMSFYNLFFTVWPPFVIGVF). The Cytoplasmic segment spans residues 1065–1094 (DQFVSSRLLERYPQLYKLGQKGQFFSVYIF). Residues 1095–1115 (WGWIINGFFHSAIVFIGTILI) form a helical membrane-spanning segment. Topologically, residues 1116–1131 (YRYGFALNMHGELADH) are lumenal. A helical transmembrane segment spans residues 1132 to 1152 (WSWGVTVYTTSVIIVLGKAAL). Lys-1149 serves as a coordination point for a 1,2-diacyl-sn-glycero-3-phospho-(1D-myo-inositol 4-phosphate). The Cytoplasmic segment spans residues 1153–1161 (VTNQWTKFT). A helical membrane pass occupies residues 1162–1182 (LIAIPGSLLFWLIFFPIYASI). Topologically, residues 1183 to 1202 (FPHANISREYYGVVKHTYGS) are lumenal. Residues 1203-1223 (GVFWLTLIVLPIFALVRDFLW) form a helical membrane-spanning segment. The a 1,2-diacyl-sn-glycero-3-phospho-(1D-myo-inositol 4-phosphate) site is built by Arg-1219, Trp-1223, Lys-1224, Tyr-1235, and His-1236. The Cytoplasmic portion of the chain corresponds to 1224–1355 (KYYKRMYEPE…SSRDDISFDI (132 aa)). The interaction with GEA2 stretch occupies residues 1230-1282 (YEPETYHVIQEMQKYNISDSRPHVQQFQNAIRKVRQVQRMKKQRGFAFSQAEE). The involved in autoinhibition stretch occupies residues 1231–1309 (EPETYHVIQE…KYGELQDASA (79 aa)). The interval 1305–1355 (QDASANPFNDNNGLGSNDFESAEPFIENPFADGNQNSNRFSSSRDDISFDI) is disordered. Residues 1307 to 1323 (ASANPFNDNNGLGSNDF) show a composition bias toward polar residues. Positions 1346–1355 (SSRDDISFDI) are enriched in basic and acidic residues.

It belongs to the cation transport ATPase (P-type) (TC 3.A.3) family. Type IV subfamily. Component of a flippase complex consisting of DRS2 and CDC50. Interacts with CDC50; the interaction is direct, is required for their mutual export from the endoplasmic reticulum, and preferentially occurs when DRS2 is in the E2P state. Interacts (via C-terminus) with GEA2 (via SEC7 domain); the interaction is direct. Interacts with GEA1. Mg(2+) is required as a cofactor.

The protein localises to the golgi apparatus. It localises to the trans-Golgi network membrane. Its subcellular location is the endosome membrane. It catalyses the reaction ATP + H2O + phospholipidSide 1 = ADP + phosphate + phospholipidSide 2.. It carries out the reaction a 1,2-diacyl-sn-glycero-3-phospho-L-serine(out) + ATP + H2O = a 1,2-diacyl-sn-glycero-3-phospho-L-serine(in) + ADP + phosphate + H(+). The enzyme catalyses a 1,2-diacyl-sn-glycero-3-phosphoethanolamine(out) + ATP + H2O = a 1,2-diacyl-sn-glycero-3-phosphoethanolamine(in) + ADP + phosphate + H(+). Its activity is regulated as follows. Allosterically activated by binding 1,2-diacyl-sn-glycero-3-phospho-(1D-myo-inositol 4-phosphate) (phosphatidylinositol 4-phosphate). Inhibited by orthovanadate, N-ethylmaleimide, trifluoroberyllate and tetrafluoroaluminate; orthovanadate and N-ethylmaleimide inhibit phosphorylation of the active site aspartic acid. The ATPase activity is not potently stimulated by phosphatidylinositol 3-phosphate and phosphatidylinositol 5-phosphate, phosphatidylinositol 4,5-bisphosphate or phosphatidylcholine. Not inhibited by azide. Functionally, catalytic component of a P4-ATPase flippase complex which catalyzes the hydrolysis of ATP coupled to the transport of phosphatidylserine and small amounts of ethanolamine from the lumen to the cytosolic leaflet of the trans-Golgi network and ensures the maintenance of asymmetric distribution of phospholipids. Contributes to clathrin-coated vesicle formation, endocytosis, and protein trafficking between the Golgi and endosomal system. Does not appear to transport phosphatidylcholine or sphingomyelin. The sequence is that of Phospholipid-transporting ATPase DRS2 from Saccharomyces cerevisiae (strain ATCC 204508 / S288c) (Baker's yeast).